Here is an 816-residue protein sequence, read N- to C-terminus: Microbial collagenase (816 aa).

An N-terminal signal peptide occupies residues 1-27 (MSHIRFFPRHRLALACMLASVSSFSFA). A Zn(2+)-binding site is contributed by His435. The active site involves Glu436. His439 lines the Zn(2+) pocket.

It belongs to the peptidase M9A family. Zn(2+) serves as cofactor.

The protein resides in the secreted. The catalysed reaction is Digestion of native collagen in the triple helical region at Xaa-|-Gly bonds. With synthetic peptides, a preference is shown for Gly at P3 and P1', Pro and Ala at P2 and P2', and hydroxyproline, Ala or Arg at P3'.. Possesses gelatinolytic activity. Can cause weak haemolysis on blood agar. This Vibrio parahaemolyticus serotype O3:K6 (strain RIMD 2210633) protein is Microbial collagenase (prt).